A 629-amino-acid polypeptide reads, in one-letter code: MHFHERFDVIVVGGGHAGTEAALASARMGSKTLLLTHNIDTLGQMSCNPAIGGIGKGHLVKEIDALGGAMAIATDFAGIQFRTLNSSKGPAVRATRAQADRALYRQKIQQILQSQPNLRIFQQAVDDLVVENNQVVGVVTQMGLAFESPTVVLTTGTFLSGKIHIGMQNYSGGRAGDPPAIALANRLRELPIRVGRLKTGTPPRIDANSIDFSQMTEQKGDTPLPVMSFVGNVDQHPRQISCHITHTNEKTHDIIRGGLDRSPMYSGVIEGIGPRYCPSIEDKIHRFADKTSHQIFIEPEGLSTNEIYPNGISTSLPFDVQLNLVRSIKGMENAEIIRPGYAIEYDYFDPRDLKNSLETKTINGLFFAGQINGTTGYEEAGAQGLLAGMNASLQVQGKETWCPRRDQAYLGVLVDDLSTLGTKEPYRMFTSRAEYRLLLREDNADLRLTEKGRELGLVNDDRWAKFTEKRESIELELQRLRGQWIHPNSPLLGVLNPELNTPISREASFEDLLRRPEMDYQKLMSLEGFGPGLEDPSAAEQVQIQVKYSGYIQRQQDEIDKAIRHENSLLPLDLDYQEVPGLSNEVIAKLNNHKPDTIGQASRISGITPAAISILLVHLKKRGLLRKTA.

13-18 (GGGHAG) lines the FAD pocket. 273-287 (GPRYCPSIEDKIHRF) is a binding site for NAD(+).

It belongs to the MnmG family. In terms of assembly, homodimer. Heterotetramer of two MnmE and two MnmG subunits. It depends on FAD as a cofactor.

Its subcellular location is the cytoplasm. Functionally, NAD-binding protein involved in the addition of a carboxymethylaminomethyl (cmnm) group at the wobble position (U34) of certain tRNAs, forming tRNA-cmnm(5)s(2)U34. The chain is tRNA uridine 5-carboxymethylaminomethyl modification enzyme MnmG from Shewanella denitrificans (strain OS217 / ATCC BAA-1090 / DSM 15013).